A 417-amino-acid polypeptide reads, in one-letter code: Prostaglandin E2 receptor EP3 subtype (417 aa).

Over 1–52 (MKATRDHASAPFCTRFNHSDPGIWAAERAVEAPNNLTLPPEPSEDCGSVSVA) the chain is Extracellular. 2 N-linked (GlcNAc...) asparagine glycosylation sites follow: Asn17 and Asn35. The chain crosses the membrane as a helical span at residues 53–77 (FSMTMMITGFVGNALAITLVSKSYR). Topologically, residues 78–90 (RREGKRKKSFLLC) are cytoplasmic. A helical membrane pass occupies residues 91-111 (IGWLALTDMVGQLLTSPVVIV). Topologically, residues 112 to 130 (LYLSHQRWEQLDPSGRLCT) are extracellular. A helical membrane pass occupies residues 131-152 (FFGLTMTVFGLSSLFIASAMAV). At 153–174 (ERALATRAPHWYSSHMKTSVTR) the chain is on the cytoplasmic side. A helical transmembrane segment spans residues 175-196 (AVLLGVWLAVLAFALLPVLGVG). The Extracellular portion of the chain corresponds to 197-226 (QYTIQWPGTWCFISTGPGGNGTNSRQNWGN). N-linked (GlcNAc...) asparagine glycosylation is present at Asn216. Residues 227–252 (VFFASAFAILGLSALVVTFACNLATI) traverse the membrane as a helical segment. The Cytoplasmic portion of the chain corresponds to 253 to 282 (KALVSRCRAKATASQSSAQWGRITTETAIQ). The chain crosses the membrane as a helical span at residues 283 to 306 (LMGIMCVLSVCWSPLLIMMLKMIF). Asn307 is a glycosylation site (N-linked (GlcNAc...) asparagine). Over 307 to 326 (NHTSVEHCKTYTENQDECNF) the chain is Extracellular. The helical transmembrane segment at 327 to 348 (FLIAVRLASLNQILDPWVYLLL) threads the bilayer. At 349 to 417 (RKILLQKFCQ…HIYLHTLEHQ (69 aa)) the chain is on the cytoplasmic side.

It belongs to the G-protein coupled receptor 1 family. Interacts (via C-terminus) with MKLN1.

It localises to the cell membrane. Receptor for prostaglandin E2 (PGE2). The various isoforms have identical ligand binding properties but interact with different second messenger systems: isoform EP3A couples to G(i)/G(o) proteins; isoform EP3B and isoform EP3C couple to G(s), and isoform EP3D couples to G(i), G(s) and G(p). Required for normal development of fever in response to pyrinogens, including IL1B, prostaglandin E2 and bacterial lipopolysaccharide (LPS). Required for normal potentiation of platelet aggregation by prostaglandin E2, and thus plays a role in the regulation of blood coagulation. Required for increased HCO3(-) secretion in the duodenum in response to mucosal acidification, and thereby contributes to the protection of the mucosa against acid-induced ulceration. Not required for normal kidney function, normal urine volume and osmolality. This chain is Prostaglandin E2 receptor EP3 subtype (PTGER3), found in Bos taurus (Bovine).